Reading from the N-terminus, the 60-residue chain is Small ribosomal subunit protein bS21 (60 aa).

A disordered region spans residues 36 to 60; it reads QFFETPQEKHKRKEATRRRQRSRRR. Positions 44–60 are enriched in basic residues; that stretch reads KHKRKEATRRRQRSRRR.

The protein belongs to the bacterial ribosomal protein bS21 family.

The polypeptide is Small ribosomal subunit protein bS21 (rpsU) (Synechocystis sp. (strain ATCC 27184 / PCC 6803 / Kazusa)).